The following is a 448-amino-acid chain: Endoglucanase (448 aa).

The first 34 residues, 1–34 (MFSKIKKINFFKKTFSFLIAVVMMLFTVLGTNTY), serve as a signal peptide directing secretion. Residues His70, 74–75 (WY), Tyr101, and His137 each bind substrate. Catalysis depends on Glu175, which acts as the Proton donor. Tyr237 contributes to the substrate binding site. The active-site Nucleophile is the Glu263. Substrate contacts are provided by residues 269–270 (AS), Trp297, and 302–304 (KSE).

It belongs to the glycosyl hydrolase 5 (cellulase A) family.

The enzyme catalyses Endohydrolysis of (1-&gt;4)-beta-D-glucosidic linkages in cellulose, lichenin and cereal beta-D-glucans.. This chain is Endoglucanase (eglA), found in Clostridium saccharobutylicum.